A 650-amino-acid polypeptide reads, in one-letter code: Acetyl-coenzyme A synthetase (650 aa).

CoA is bound by residues R191 to R194, T311, and N335. ATP-binding positions include G387–P389, D411–T416, D501, and R516. A CoA-binding site is contributed by S524. R527 provides a ligand contact to ATP. Mg(2+) contacts are provided by V538, H540, and I543. R585 serves as a coordination point for CoA. K610 carries the N6-acetyllysine modification.

The protein belongs to the ATP-dependent AMP-binding enzyme family. Mg(2+) is required as a cofactor. Post-translationally, acetylated. Deacetylation by the SIR2-homolog deacetylase activates the enzyme.

It carries out the reaction acetate + ATP + CoA = acetyl-CoA + AMP + diphosphate. Its function is as follows. Catalyzes the conversion of acetate into acetyl-CoA (AcCoA), an essential intermediate at the junction of anabolic and catabolic pathways. AcsA undergoes a two-step reaction. In the first half reaction, AcsA combines acetate with ATP to form acetyl-adenylate (AcAMP) intermediate. In the second half reaction, it can then transfer the acetyl group from AcAMP to the sulfhydryl group of CoA, forming the product AcCoA. This Vibrio parahaemolyticus serotype O3:K6 (strain RIMD 2210633) protein is Acetyl-coenzyme A synthetase.